The following is a 391-amino-acid chain: Phosphoglycerate kinase (391 aa).

Substrate-binding positions include 21-23 (DLN), arginine 36, 59-62 (HLGR), arginine 113, and arginine 146. ATP contacts are provided by residues lysine 197, glutamate 319, and 345 to 348 (GGDT).

It belongs to the phosphoglycerate kinase family. As to quaternary structure, monomer.

The protein resides in the cytoplasm. The catalysed reaction is (2R)-3-phosphoglycerate + ATP = (2R)-3-phospho-glyceroyl phosphate + ADP. Its pathway is carbohydrate degradation; glycolysis; pyruvate from D-glyceraldehyde 3-phosphate: step 2/5. This is Phosphoglycerate kinase from Xylella fastidiosa (strain Temecula1 / ATCC 700964).